Here is a 276-residue protein sequence, read N- to C-terminus: Imidazole glycerol phosphate synthase subunit HisF (276 aa).

Residues D11 and D130 contribute to the active site.

Belongs to the HisA/HisF family. Heterodimer of HisH and HisF.

It localises to the cytoplasm. The enzyme catalyses 5-[(5-phospho-1-deoxy-D-ribulos-1-ylimino)methylamino]-1-(5-phospho-beta-D-ribosyl)imidazole-4-carboxamide + L-glutamine = D-erythro-1-(imidazol-4-yl)glycerol 3-phosphate + 5-amino-1-(5-phospho-beta-D-ribosyl)imidazole-4-carboxamide + L-glutamate + H(+). It functions in the pathway amino-acid biosynthesis; L-histidine biosynthesis; L-histidine from 5-phospho-alpha-D-ribose 1-diphosphate: step 5/9. Its function is as follows. IGPS catalyzes the conversion of PRFAR and glutamine to IGP, AICAR and glutamate. The HisF subunit catalyzes the cyclization activity that produces IGP and AICAR from PRFAR using the ammonia provided by the HisH subunit. The sequence is that of Imidazole glycerol phosphate synthase subunit HisF from Beijerinckia indica subsp. indica (strain ATCC 9039 / DSM 1715 / NCIMB 8712).